A 158-amino-acid chain; its full sequence is UPF0262 protein Rsph17025_0594 (158 aa).

Belongs to the UPF0262 family.

The chain is UPF0262 protein Rsph17025_0594 from Cereibacter sphaeroides (strain ATCC 17025 / ATH 2.4.3) (Rhodobacter sphaeroides).